A 118-amino-acid chain; its full sequence is V-type proton ATPase subunit G 1 (118 aa).

Ala2 is subject to N-acetylalanine. Residues 25–90 (ARKRKARRLK…VQGMQSSQQR (66 aa)) are disordered. Residues 35 to 56 (QAKEEAQMEVEQYRREREHEFQ) are compositionally biased toward basic and acidic residues. 2 stretches are compositionally biased toward polar residues: residues 57–69 (SKQQAAMGSQGNL) and 78–89 (RHQVQGMQSSQQ).

The protein belongs to the V-ATPase G subunit family. V-ATPase is a heteromultimeric enzyme made up of two complexes: the ATP-hydrolytic V1 complex and the proton translocation V0 complex. The V1 complex consists of three catalytic AB heterodimers that form a heterohexamer, three peripheral stalks each consisting of EG heterodimers, one central rotor including subunits D and F, and the regulatory subunits C and H. The proton translocation complex V0 consists of the proton transport subunit a, a ring of proteolipid subunits c9c'', rotary subunit d, subunits e and f, and the accessory subunits ATP6AP1/Ac45 and ATP6AP2/PRR.

The protein resides in the apical cell membrane. Its function is as follows. Subunit of the V1 complex of vacuolar(H+)-ATPase (V-ATPase), a multisubunit enzyme composed of a peripheral complex (V1) that hydrolyzes ATP and a membrane integral complex (V0) that translocates protons. V-ATPase is responsible for acidifying and maintaining the pH of intracellular compartments and in some cell types, is targeted to the plasma membrane, where it is responsible for acidifying the extracellular environment. In aerobic conditions, involved in intracellular iron homeostasis, thus triggering the activity of Fe(2+) prolyl hydroxylase (PHD) enzymes, and leading to HIF1A hydroxylation and subsequent proteasomal degradation. This chain is V-type proton ATPase subunit G 1 (ATP6V1G1), found in Pan troglodytes (Chimpanzee).